The following is a 449-amino-acid chain: Exodeoxyribonuclease 7 large subunit (449 aa).

The protein belongs to the XseA family. As to quaternary structure, heterooligomer composed of large and small subunits.

It is found in the cytoplasm. It catalyses the reaction Exonucleolytic cleavage in either 5'- to 3'- or 3'- to 5'-direction to yield nucleoside 5'-phosphates.. Functionally, bidirectionally degrades single-stranded DNA into large acid-insoluble oligonucleotides, which are then degraded further into small acid-soluble oligonucleotides. This Salmonella newport (strain SL254) protein is Exodeoxyribonuclease 7 large subunit.